Reading from the N-terminus, the 72-residue chain is Large ribosomal subunit protein bL32 (72 aa).

Belongs to the bacterial ribosomal protein bL32 family.

In Dehalococcoides mccartyi (strain ATCC BAA-2100 / JCM 16839 / KCTC 5957 / BAV1), this protein is Large ribosomal subunit protein bL32.